Reading from the N-terminus, the 542-residue chain is Malate synthase, glyoxysomal (542 aa).

Arg-168 serves as the catalytic Proton acceptor. The active-site Proton donor is Asp-449. The Microbody targeting signal signature appears at 540–542 (SKL).

This sequence belongs to the malate synthase family.

It localises to the glyoxysome. The enzyme catalyses glyoxylate + acetyl-CoA + H2O = (S)-malate + CoA + H(+). It participates in carbohydrate metabolism; glyoxylate cycle; (S)-malate from isocitrate: step 2/2. The sequence is that of Malate synthase, glyoxysomal (acu-9) from Neurospora crassa (strain ATCC 24698 / 74-OR23-1A / CBS 708.71 / DSM 1257 / FGSC 987).